The primary structure comprises 369 residues: 3-dehydroquinate synthase (369 aa).

NAD(+) contacts are provided by residues 75-80 (DGEEHK), 109-113 (GVIGD), 133-134 (TT), Lys146, Lys155, and 173-176 (TLKT). Zn(2+) contacts are provided by Glu188, His251, and His268.

It belongs to the sugar phosphate cyclases superfamily. Dehydroquinate synthase family. Requires Co(2+) as cofactor. Zn(2+) serves as cofactor. NAD(+) is required as a cofactor.

The protein localises to the cytoplasm. The catalysed reaction is 7-phospho-2-dehydro-3-deoxy-D-arabino-heptonate = 3-dehydroquinate + phosphate. It functions in the pathway metabolic intermediate biosynthesis; chorismate biosynthesis; chorismate from D-erythrose 4-phosphate and phosphoenolpyruvate: step 2/7. Functionally, catalyzes the conversion of 3-deoxy-D-arabino-heptulosonate 7-phosphate (DAHP) to dehydroquinate (DHQ). The polypeptide is 3-dehydroquinate synthase (Legionella pneumophila (strain Lens)).